A 151-amino-acid chain; its full sequence is Deoxyuridine 5'-triphosphate nucleotidohydrolase (151 aa).

Residues 70–72 (RSG), Asn-83, 87–89 (LID), and Met-97 each bind substrate.

This sequence belongs to the dUTPase family. It depends on Mg(2+) as a cofactor.

The catalysed reaction is dUTP + H2O = dUMP + diphosphate + H(+). It functions in the pathway pyrimidine metabolism; dUMP biosynthesis; dUMP from dCTP (dUTP route): step 2/2. Functionally, this enzyme is involved in nucleotide metabolism: it produces dUMP, the immediate precursor of thymidine nucleotides and it decreases the intracellular concentration of dUTP so that uracil cannot be incorporated into DNA. The polypeptide is Deoxyuridine 5'-triphosphate nucleotidohydrolase (Tolumonas auensis (strain DSM 9187 / NBRC 110442 / TA 4)).